Consider the following 198-residue polypeptide: Na(+)-translocating NADH-quinone reductase subunit E (198 aa).

The next 6 membrane-spanning stretches (helical) occupy residues serine 11–valine 31, phenylalanine 39–valine 59, phenylalanine 77–valine 97, glycine 110–valine 130, isoleucine 140–isoleucine 160, and leucine 176–valine 196.

This sequence belongs to the NqrDE/RnfAE family. In terms of assembly, composed of six subunits; NqrA, NqrB, NqrC, NqrD, NqrE and NqrF. In terms of processing, the N-terminus is blocked.

Its subcellular location is the cell inner membrane. The catalysed reaction is a ubiquinone + n Na(+)(in) + NADH + H(+) = a ubiquinol + n Na(+)(out) + NAD(+). Its activity is regulated as follows. This reaction is tightly coupled to the Na(+) pumping activity and specifically requires Na(+) for activity. Inhibited by korormicin and 2-N-heptyl-4-hydroxyquinoline N-oxide (HQNO). Its function is as follows. NQR complex catalyzes the reduction of ubiquinone-1 to ubiquinol by two successive reactions, coupled with the transport of Na(+) ions from the cytoplasm to the periplasm. NqrA to NqrE are probably involved in the second step, the conversion of ubisemiquinone to ubiquinol. In Vibrio alginolyticus, this protein is Na(+)-translocating NADH-quinone reductase subunit E.